Here is a 250-residue protein sequence, read N- to C-terminus: UPF0014 membrane protein YjkA (250 aa).

The next 6 membrane-spanning stretches (helical) occupy residues Tyr3–Phe23, Ile32–Ile52, His57–Ile77, Phe91–Ile111, Tyr117–Leu137, and Leu214–Leu234.

It belongs to the UPF0014 family.

The protein resides in the cell membrane. The protein is UPF0014 membrane protein YjkA (yjkA) of Bacillus subtilis (strain 168).